We begin with the raw amino-acid sequence, 208 residues long: Imidazoleglycerol-phosphate dehydratase (208 aa).

A disordered region spans residues 1–22; the sequence is MTEDTETSSTGAGADDRTAAIS.

Belongs to the imidazoleglycerol-phosphate dehydratase family.

The protein resides in the cytoplasm. It carries out the reaction D-erythro-1-(imidazol-4-yl)glycerol 3-phosphate = 3-(imidazol-4-yl)-2-oxopropyl phosphate + H2O. Its pathway is amino-acid biosynthesis; L-histidine biosynthesis; L-histidine from 5-phospho-alpha-D-ribose 1-diphosphate: step 6/9. In Haloquadratum walsbyi (strain DSM 16790 / HBSQ001), this protein is Imidazoleglycerol-phosphate dehydratase.